A 367-amino-acid polypeptide reads, in one-letter code: Choline-phosphate cytidylyltransferase A (367 aa).

Methionine 1 bears the N-acetylmethionine mark. The segment at 1–33 (MDAQCSAKVNARKRRKEAPGPNGATEEDGVPSK) is disordered. Lysine 8 carries the N6-acetyllysine modification. CTP is bound by residues isoleucine 84, phenylalanine 85, histidine 92, and lysine 122. Lysine 122 and tryptophan 151 together coordinate phosphocholine. 7 residues coordinate CTP: histidine 168, aspartate 169, tyrosine 173, glutamine 195, arginine 196, threonine 197, and isoleucine 200. 2 amphipathic regions span residues 228-287 (KELN…EFIG) and 298-315 (ALKH…QAIS). Phosphoserine is present on serine 233. Residues 272 to 293 (IDLIQKWEEKSREFIGSFLEMF) are autoinhibitory (AI). The interval 313-367 (AISPKQSPSSSPTRERSPSPSFRWPFSGKTSPPCSPANLSRHKAAAYDISEDEED) is disordered. A phosphoserine mark is found at serine 315, serine 319, serine 321, serine 322, and serine 323. Residues 319-324 (SPSSSP) form repeat 1. The span at 319 to 339 (SPSSSPTRERSPSPSFRWPFS) shows a compositional bias: low complexity. Threonine 325 is subject to Phosphothreonine. A phosphoserine mark is found at serine 329, serine 331, and serine 333. The stretch at 329–333 (SPSPS) is one 2; approximate repeat. Threonine 342 carries the phosphothreonine modification. Phosphoserine is present on residues serine 343, serine 347, serine 352, and serine 362. Residues 343 to 348 (SPPCSP) form repeat 3.

Belongs to the cytidylyltransferase family. As to quaternary structure, homodimer. In terms of processing, the serine residues of the C-terminus are phosphorylated. The inactive soluble form is stabilized by phosphorylation, the active membrane bound form is promoted by anionic lipids or diacylglycerol, and is stabilized by dephosphorylation. Monoubiquitinated by the SCF(FBXL2) complex, leading to proteasomal degradation. In terms of tissue distribution, brain, placenta, liver, fetal and adult lung.

Its subcellular location is the cytoplasm. The protein localises to the cytosol. It is found in the membrane. The protein resides in the endoplasmic reticulum membrane. It localises to the nucleus. The catalysed reaction is phosphocholine + CTP + H(+) = CDP-choline + diphosphate. The protein operates within phospholipid metabolism; phosphatidylcholine biosynthesis; phosphatidylcholine from phosphocholine: step 1/2. With respect to regulation, interconverts between an inactive cytosolic form and an active membrane-bound form. Activation involves disruption of an inhibitory interaction between helices at the base of the active site and the autoinhibitory (AI) region. Activated by anionic lipid vesicles and by oleic acid or diacylglycerol-containing phosphatidylcholine vesicles. In terms of biological role, catalyzes the key rate-limiting step in the CDP-choline pathway for phosphatidylcholine biosynthesis. This Homo sapiens (Human) protein is Choline-phosphate cytidylyltransferase A (PCYT1A).